A 122-amino-acid polypeptide reads, in one-letter code: Large ribosomal subunit protein uL14 (122 aa).

The protein belongs to the universal ribosomal protein uL14 family. Part of the 50S ribosomal subunit. Forms a cluster with proteins L3 and L19. In the 70S ribosome, L14 and L19 interact and together make contacts with the 16S rRNA in bridges B5 and B8.

Its function is as follows. Binds to 23S rRNA. Forms part of two intersubunit bridges in the 70S ribosome. This Geobacillus sp. (strain WCH70) protein is Large ribosomal subunit protein uL14.